Reading from the N-terminus, the 377-residue chain is Chaperone protein DnaJ (377 aa).

Positions aspartate 5–glycine 70 constitute a J domain. The segment at glycine 136–glutamine 214 adopts a CR-type zinc-finger fold. Zn(2+) is bound by residues cysteine 149, cysteine 152, cysteine 166, cysteine 169, cysteine 188, cysteine 191, cysteine 202, and cysteine 205. CXXCXGXG motif repeat units follow at residues cysteine 149–glycine 156, cysteine 166–glycine 173, cysteine 188–glycine 195, and cysteine 202–glycine 209.

It belongs to the DnaJ family. Homodimer. The cofactor is Zn(2+).

The protein localises to the cytoplasm. Participates actively in the response to hyperosmotic and heat shock by preventing the aggregation of stress-denatured proteins and by disaggregating proteins, also in an autonomous, DnaK-independent fashion. Unfolded proteins bind initially to DnaJ; upon interaction with the DnaJ-bound protein, DnaK hydrolyzes its bound ATP, resulting in the formation of a stable complex. GrpE releases ADP from DnaK; ATP binding to DnaK triggers the release of the substrate protein, thus completing the reaction cycle. Several rounds of ATP-dependent interactions between DnaJ, DnaK and GrpE are required for fully efficient folding. Also involved, together with DnaK and GrpE, in the DNA replication of plasmids through activation of initiation proteins. In Pseudomonas paraeruginosa (strain DSM 24068 / PA7) (Pseudomonas aeruginosa (strain PA7)), this protein is Chaperone protein DnaJ.